A 317-amino-acid chain; its full sequence is DNA-directed RNA polymerase subunit alpha (317 aa).

The segment at 1 to 234 (MKQFNKPEFG…SHFDVFTTLA (234 aa)) is alpha N-terminal domain (alpha-NTD). Residues 249-317 (EEKELDKPVE…AALELTFKQN (69 aa)) are alpha C-terminal domain (alpha-CTD).

Belongs to the RNA polymerase alpha chain family. As to quaternary structure, homodimer. The RNAP catalytic core consists of 2 alpha, 1 beta, 1 beta' and 1 omega subunit. When a sigma factor is associated with the core the holoenzyme is formed, which can initiate transcription.

The catalysed reaction is RNA(n) + a ribonucleoside 5'-triphosphate = RNA(n+1) + diphosphate. Its function is as follows. DNA-dependent RNA polymerase catalyzes the transcription of DNA into RNA using the four ribonucleoside triphosphates as substrates. This chain is DNA-directed RNA polymerase subunit alpha, found in Mesoplasma florum (strain ATCC 33453 / NBRC 100688 / NCTC 11704 / L1) (Acholeplasma florum).